The chain runs to 257 residues: Short chain dehydrogenase ausX (257 aa).

NADP(+) contacts are provided by isoleucine 11, aspartate 57, arginine 119, tyrosine 151, lysine 155, and valine 184. The Proton acceptor role is filled by tyrosine 151. Residue lysine 155 is the Lowers pKa of active site Tyr of the active site.

Belongs to the short-chain dehydrogenases/reductases (SDR) family.

It functions in the pathway secondary metabolite biosynthesis; terpenoid biosynthesis. Functionally, short chain dehydrogenase; part of the gene cluster that mediates the biosynthesis of calidodehydroaustin, a fungal meroterpenoid. The first step of the pathway is the synthesis of 3,5-dimethylorsellinic acid by the polyketide synthase ausA. 3,5-dimethylorsellinic acid is then prenylated by the polyprenyl transferase ausN. Further epoxidation by the FAD-dependent monooxygenase ausM and cyclization by the probable terpene cyclase ausL lead to the formation of protoaustinoid A. Protoaustinoid A is then oxidized to spiro-lactone preaustinoid A3 by the combined action of the FAD-binding monooxygenases ausB and ausC, and the dioxygenase ausE. Acid-catalyzed keto-rearrangement and ring contraction of the tetraketide portion of preaustinoid A3 by ausJ lead to the formation of preaustinoid A4. The aldo-keto reductase ausK, with the help of ausH, is involved in the next step by transforming preaustinoid A4 into isoaustinone which is in turn hydroxylated by the P450 monooxygenase ausI to form austinolide. The cytochrome P450 monooxygenase ausG modifies austinolide to austinol. Austinol is further acetylated to austin by the O-acetyltransferase ausP, which spontaneously changes to dehydroaustin. The cytochrome P450 monooxygenase ausR then converts dehydroaustin is into 7-dehydrodehydroaustin. The hydroxylation catalyzed by ausR permits the O-acetyltransferase ausQ to add an additional acetyl group to the molecule, leading to the formation of acetoxydehydroaustin. The short chain dehydrogenase ausT catalyzes the reduction of the double bond present between carbon atoms 1 and 2 to convert 7-dehydrodehydroaustin into 1,2-dihydro-7-hydroxydehydroaustin. AusQ catalyzes not only an acetylation reaction but also the addition of the PKS ausV diketide product to 1,2-dihydro-7-hydroxydehydroaustin, forming precalidodehydroaustin. Finally, the iron/alpha-ketoglutarate-dependent dioxygenase converts precalidodehydroaustin into calidodehydroaustin. This chain is Short chain dehydrogenase ausX, found in Aspergillus calidoustus.